A 271-amino-acid polypeptide reads, in one-letter code: Ribosomal RNA small subunit methyltransferase A (271 aa).

Residues N28, L30, G54, E75, D99, and N117 each coordinate S-adenosyl-L-methionine.

It belongs to the class I-like SAM-binding methyltransferase superfamily. rRNA adenine N(6)-methyltransferase family. RsmA subfamily.

Its subcellular location is the cytoplasm. The catalysed reaction is adenosine(1518)/adenosine(1519) in 16S rRNA + 4 S-adenosyl-L-methionine = N(6)-dimethyladenosine(1518)/N(6)-dimethyladenosine(1519) in 16S rRNA + 4 S-adenosyl-L-homocysteine + 4 H(+). Its function is as follows. Specifically dimethylates two adjacent adenosines (A1518 and A1519) in the loop of a conserved hairpin near the 3'-end of 16S rRNA in the 30S particle. May play a critical role in biogenesis of 30S subunits. This Thermus thermophilus (strain ATCC BAA-163 / DSM 7039 / HB27) protein is Ribosomal RNA small subunit methyltransferase A.